Here is a 149-residue protein sequence, read N- to C-terminus: Large ribosomal subunit protein uL13 (149 aa).

Belongs to the universal ribosomal protein uL13 family. As to quaternary structure, part of the 50S ribosomal subunit.

In terms of biological role, this protein is one of the early assembly proteins of the 50S ribosomal subunit, although it is not seen to bind rRNA by itself. It is important during the early stages of 50S assembly. This chain is Large ribosomal subunit protein uL13, found in Bifidobacterium longum (strain DJO10A).